A 307-amino-acid chain; its full sequence is MWFKNLQLHRLPAPWAVTPDQMEKWLAPHAFQPGSSVEMQRVGWASPRDDGALVYSNNRQMLLLFRAEKKLLPASVVNQVTKARALEVEEQQGFKVGRKQLRELKEQVTDELLPRAFSIRRDTRVWIDTANGWLVIDAAAQALADDVRSLLVKSIDQLPLAGVHVARSPVAAMTDWLLSGEAPGGFTVDQDAELRSSGEGGATVRYVGHALEANDMRRHIEAGKQCMRLAMTWNDRISFVLTPSLTIKRVTPLDVIKEAADPTAQNDDERFDSDFTLMTGELARMLASLVDILGGDQQDAIQQAAAA.

It belongs to the RdgC family.

The protein localises to the cytoplasm. The protein resides in the nucleoid. Its function is as follows. May be involved in recombination. This Burkholderia orbicola (strain MC0-3) protein is Recombination-associated protein RdgC.